Reading from the N-terminus, the 806-residue chain is Glycerol-3-phosphate acyltransferase (806 aa).

The HXXXXD motif signature appears at 305–310; that stretch reads CHRSHM.

It belongs to the GPAT/DAPAT family.

Its subcellular location is the cell inner membrane. The catalysed reaction is sn-glycerol 3-phosphate + an acyl-CoA = a 1-acyl-sn-glycero-3-phosphate + CoA. The protein operates within phospholipid metabolism; CDP-diacylglycerol biosynthesis; CDP-diacylglycerol from sn-glycerol 3-phosphate: step 1/3. This chain is Glycerol-3-phosphate acyltransferase, found in Salmonella agona (strain SL483).